The following is a 325-amino-acid chain: uncharacterized protein (325 aa).

Residues 10–30 (IVFVSLAALVLLVSVSVFIYH) traverse the membrane as a helical segment. One can recognise an AB hydrolase-1 domain in the interval 94 to 166 (KIAVVDRAGY…EIKAIIAMDI (73 aa)).

Its subcellular location is the cell membrane. This is an uncharacterized protein from Bacillus subtilis (strain 168).